The chain runs to 545 residues: Methionine--tRNA ligase (545 aa).

The 'HIGH' region motif lies at 10-20; that stretch reads PYANGSLHIGH. Zn(2+) contacts are provided by Cys-141, Cys-144, Cys-153, and Cys-156. The 'KMSKS' region signature appears at 329-333; that stretch reads KISTS. Position 332 (Thr-332) interacts with ATP.

Belongs to the class-I aminoacyl-tRNA synthetase family. MetG type 1 subfamily. In terms of assembly, monomer. Requires Zn(2+) as cofactor.

Its subcellular location is the cytoplasm. It carries out the reaction tRNA(Met) + L-methionine + ATP = L-methionyl-tRNA(Met) + AMP + diphosphate. Its function is as follows. Is required not only for elongation of protein synthesis but also for the initiation of all mRNA translation through initiator tRNA(fMet) aminoacylation. This chain is Methionine--tRNA ligase, found in Streptococcus pneumoniae (strain 70585).